A 169-amino-acid chain; its full sequence is ATP synthase subunit b (169 aa).

The chain crosses the membrane as a helical span at residues 11–31 (KLPLGNMLFIIISFLVLMVIL).

It belongs to the ATPase B chain family. As to quaternary structure, F-type ATPases have 2 components, F(1) - the catalytic core - and F(0) - the membrane proton channel. F(1) has five subunits: alpha(3), beta(3), gamma(1), delta(1), epsilon(1). F(0) has three main subunits: a(1), b(2) and c(10-14). The alpha and beta chains form an alternating ring which encloses part of the gamma chain. F(1) is attached to F(0) by a central stalk formed by the gamma and epsilon chains, while a peripheral stalk is formed by the delta and b chains.

Its subcellular location is the cell membrane. Functionally, f(1)F(0) ATP synthase produces ATP from ADP in the presence of a proton or sodium gradient. F-type ATPases consist of two structural domains, F(1) containing the extramembraneous catalytic core and F(0) containing the membrane proton channel, linked together by a central stalk and a peripheral stalk. During catalysis, ATP synthesis in the catalytic domain of F(1) is coupled via a rotary mechanism of the central stalk subunits to proton translocation. Component of the F(0) channel, it forms part of the peripheral stalk, linking F(1) to F(0). In Leuconostoc citreum (strain KM20), this protein is ATP synthase subunit b.